A 256-amino-acid polypeptide reads, in one-letter code: Homeobox-leucine zipper protein HOX18 (256 aa).

Positions Y52–K116 are disordered. Over residues D102–G112 the composition is skewed to gly residues. Positions G112–Q171 form a DNA-binding region, homeobox. Positions K170–Q214 are leucine-zipper.

This sequence belongs to the HD-ZIP homeobox family. Class II subfamily. In terms of tissue distribution, expressed in roots, leaf sheaths and blades and panicles.

It localises to the nucleus. Its function is as follows. Probable transcription factor. This Oryza sativa subsp. japonica (Rice) protein is Homeobox-leucine zipper protein HOX18 (HOX18).